The following is a 48-amino-acid chain: Large ribosomal subunit protein bL32 (48 aa).

It belongs to the bacterial ribosomal protein bL32 family.

The sequence is that of Large ribosomal subunit protein bL32 from Helicobacter pylori (strain P12).